The sequence spans 152 residues: Avidin (152 aa).

The signal sequence occupies residues 1-24; it reads MVHATSPLLLLLLLSLALVAPGLS. Positions 26–149 constitute an Avidin-like domain; it reads RKCSLTGKWT…GINIFTRLRT (124 aa). Cys-28 and Cys-107 are joined by a disulfide. A glycan (N-linked (GlcNAc...) asparagine) is linked at Asn-41. Tyr-57 contacts biotin.

The protein belongs to the avidin/streptavidin family. In terms of assembly, homotetramer. In terms of processing, N-linked glycan at Asn-41 consists of GlcNAc(beta1-2)Man(alpha1-3)[GlcNAc(beta1-4)][Man(alpha1-?)Man(alpha1-6)] Man(beta1-4)GlcNAc(beta1-4)GlcNAc. As to expression, synthesized in hen oviduct and concentrated in egg white (where it represents 0.05% of the total protein).

It localises to the secreted. In terms of biological role, the biological function of avidin is not known. Forms a strong non-covalent specific complex with biotin (one molecule of biotin per subunit of avidin). The chain is Avidin (AVD) from Gallus gallus (Chicken).